The sequence spans 682 residues: Potassium-transporting ATPase ATP-binding subunit (682 aa).

4 helical membrane passes run 34–54 (PVMF…IAMA), 62–82 (ALFS…ANFA), 219–239 (IALT…TATL), and 254–274 (VLVA…LSAI). Aspartate 307 acts as the 4-aspartylphosphate intermediate in catalysis. Residues aspartate 344, glutamate 348, 377-384 (FTAQSRMS), and lysine 395 each bind ATP. Residues aspartate 518 and aspartate 522 each coordinate Mg(2+). A run of 3 helical transmembrane segments spans residues 588–608 (FAII…LNIM), 616–636 (AILS…PLAL), and 656–676 (IYGL…DLLL).

The protein belongs to the cation transport ATPase (P-type) (TC 3.A.3) family. Type IA subfamily. The system is composed of three essential subunits: KdpA, KdpB and KdpC.

The protein resides in the cell inner membrane. It catalyses the reaction K(+)(out) + ATP + H2O = K(+)(in) + ADP + phosphate + H(+). Part of the high-affinity ATP-driven potassium transport (or Kdp) system, which catalyzes the hydrolysis of ATP coupled with the electrogenic transport of potassium into the cytoplasm. This subunit is responsible for energy coupling to the transport system and for the release of the potassium ions to the cytoplasm. The polypeptide is Potassium-transporting ATPase ATP-binding subunit (Escherichia coli O17:K52:H18 (strain UMN026 / ExPEC)).